A 341-amino-acid chain; its full sequence is Aromatic amino acid aminotransferase (341 aa).

Lys-213 is subject to N6-(pyridoxal phosphate)lysine.

The protein belongs to the class-II pyridoxal-phosphate-dependent aminotransferase family. Homodimer. Pyridoxal 5'-phosphate serves as cofactor.

It catalyses the reaction an aromatic L-alpha-amino acid + 2-oxoglutarate = an aromatic oxo-acid + L-glutamate. Its function is as follows. Aminotransferase that catalyzes the conversion of aromatic amino acids and 2-oxoglutarate into corresponding aromatic oxo acids and L-glutamate. May catalyze the transamination reaction in phenylalanine biosynthesis. The sequence is that of Aromatic amino acid aminotransferase from Corynebacterium glutamicum (strain ATCC 13032 / DSM 20300 / JCM 1318 / BCRC 11384 / CCUG 27702 / LMG 3730 / NBRC 12168 / NCIMB 10025 / NRRL B-2784 / 534).